Consider the following 940-residue polypeptide: Mitogen-activated protein kinase kinase kinase 10 (940 aa).

The SH3 domain occupies 16 to 81; it reads PAGPVWTAVF…PSNYVAPAAP (66 aa). One can recognise a Protein kinase domain in the interval 98 to 360; the sequence is LQLEEIIGVG…GSILKQLEVI (263 aa). Residues 104-112 and Lys-125 each bind ATP; that span reads IGVGGFGKV. Asp-222 acts as the Proton acceptor in catalysis. Position 258 is a phosphothreonine; by autocatalysis (Thr-258). Ser-262 carries the post-translational modification Phosphoserine; by autocatalysis and MAP4K1. Leucine-zipper regions lie at residues 384–405 and 419–440; these read IQHM…EEEL and LRRR…ELHL. 3 disordered regions span residues 490-599, 687-734, and 749-917; these read PTLD…MAPG, RAGD…GLAP, and STRS…QPTL. A phosphoserine mark is found at Ser-498, Ser-502, and Ser-506. Residues 501-511 show a composition bias toward low complexity; the sequence is ASPPASPSIIP. A Phosphothreonine modification is found at Thr-552. Basic and acidic residues-rich tracts occupy residues 560 to 572 and 687 to 698; these read QKER…RLKA and RAGDGEEQRRWL. Over residues 765-775 the composition is skewed to pro residues; it reads APSPPPSPLAP. A compositionally biased stretch (basic and acidic residues) spans 822-840; that stretch reads LRQREPLELTNHGPRDPLD. An Omega-N-methylarginine modification is found at Arg-843. Residues 899 to 913 show a composition bias toward pro residues; the sequence is PSRPDTPESPGPPSV.

Belongs to the protein kinase superfamily. STE Ser/Thr protein kinase family. MAP kinase kinase kinase subfamily. In terms of assembly, homodimer. Interacts with SH3RF2. Mg(2+) serves as cofactor. In terms of processing, autophosphorylation on serine and threonine residues within the activation loop plays a role in enzyme activation.

The catalysed reaction is L-seryl-[protein] + ATP = O-phospho-L-seryl-[protein] + ADP + H(+). The enzyme catalyses L-threonyl-[protein] + ATP = O-phospho-L-threonyl-[protein] + ADP + H(+). Homodimerization via the leucine zipper domains is required for autophosphorylation and subsequent activation. In terms of biological role, activates the JUN N-terminal pathway. The sequence is that of Mitogen-activated protein kinase kinase kinase 10 (Map3k10) from Mus musculus (Mouse).